We begin with the raw amino-acid sequence, 341 residues long: Phosphoribosylformylglycinamidine cyclo-ligase (341 aa).

Belongs to the AIR synthase family.

The protein resides in the cytoplasm. It carries out the reaction 2-formamido-N(1)-(5-O-phospho-beta-D-ribosyl)acetamidine + ATP = 5-amino-1-(5-phospho-beta-D-ribosyl)imidazole + ADP + phosphate + H(+). The protein operates within purine metabolism; IMP biosynthesis via de novo pathway; 5-amino-1-(5-phospho-D-ribosyl)imidazole from N(2)-formyl-N(1)-(5-phospho-D-ribosyl)glycinamide: step 2/2. The chain is Phosphoribosylformylglycinamidine cyclo-ligase from Caldicellulosiruptor saccharolyticus (strain ATCC 43494 / DSM 8903 / Tp8T 6331).